A 1234-amino-acid polypeptide reads, in one-letter code: DNA-directed RNA polymerase subunit beta (1234 aa).

The protein belongs to the RNA polymerase beta chain family. As to quaternary structure, the RNAP catalytic core consists of 2 alpha, 1 beta, 1 beta' and 1 omega subunit. When a sigma factor is associated with the core the holoenzyme is formed, which can initiate transcription.

The enzyme catalyses RNA(n) + a ribonucleoside 5'-triphosphate = RNA(n+1) + diphosphate. DNA-dependent RNA polymerase catalyzes the transcription of DNA into RNA using the four ribonucleoside triphosphates as substrates. This chain is DNA-directed RNA polymerase subunit beta, found in Clostridium perfringens (strain ATCC 13124 / DSM 756 / JCM 1290 / NCIMB 6125 / NCTC 8237 / Type A).